Consider the following 350-residue polypeptide: DNA-directed RNA polymerase subunit alpha (350 aa).

An alpha N-terminal domain (alpha-NTD) region spans residues 1–226 (MLISQRPTLS…ELFGLARELN (226 aa)). The alpha C-terminal domain (alpha-CTD) stretch occupies residues 241–350 (ADHIASFALP…NQDYAETEQL (110 aa)). The segment at 328 to 350 (GTWTSDAGYDLDDNQDYAETEQL) is disordered. A compositionally biased stretch (acidic residues) spans 336-350 (YDLDDNQDYAETEQL).

Belongs to the RNA polymerase alpha chain family. In terms of assembly, homodimer. The RNAP catalytic core consists of 2 alpha, 1 beta, 1 beta' and 1 omega subunit. When a sigma factor is associated with the core the holoenzyme is formed, which can initiate transcription.

It carries out the reaction RNA(n) + a ribonucleoside 5'-triphosphate = RNA(n+1) + diphosphate. Its function is as follows. DNA-dependent RNA polymerase catalyzes the transcription of DNA into RNA using the four ribonucleoside triphosphates as substrates. The chain is DNA-directed RNA polymerase subunit alpha from Mycolicibacterium smegmatis (strain ATCC 700084 / mc(2)155) (Mycobacterium smegmatis).